A 1080-amino-acid polypeptide reads, in one-letter code: Presequence protease 2, chloroplastic/mitochondrial (1080 aa).

The N-terminal 84 residues, 1-84, are a transit peptide targeting the chloroplast and mitochondrion; the sequence is MLRSLTCSST…NGQFSRLSIR (84 aa). Position 161 (His161) interacts with Zn(2+). Glu164 functions as the Proton acceptor in the catalytic mechanism. His165 lines the Zn(2+) pocket. Residue Glu239 is part of the active site. Glu261 contacts Zn(2+). A Mg(2+)-binding site is contributed by Arg704.

The protein belongs to the peptidase M16 family. PreP subfamily. In terms of assembly, homodimer. Requires Zn(2+) as cofactor. Mg(2+) is required as a cofactor. As to expression, expressed in leaves, flowers and roots, but not detected in siliques and shoots.

It localises to the plastid. It is found in the chloroplast stroma. The protein localises to the mitochondrion matrix. Completely inhibited by the metal chelator orthophenanthroline. In terms of biological role, ATP-independent protease that degrades both mitochondrial and chloroplastic transit peptides after their cleavage. Also degrades other unstructured peptides. Specific for peptides in the range of 10 to 65 residues. Shows a preference for cleavage after small polar residues and before basic residues, but without any positional preference. This chain is Presequence protease 2, chloroplastic/mitochondrial (PREP2), found in Arabidopsis thaliana (Mouse-ear cress).